A 221-amino-acid chain; its full sequence is uncharacterized protein (221 aa).

Positions 33 to 167 (RPAKSAVMLY…VSPGANLELL (135 aa)) constitute an MOSC domain.

This is an uncharacterized protein from Bacillus subtilis (strain 168).